Reading from the N-terminus, the 447-residue chain is Protein disulfide-isomerase like 2-2 (447 aa).

An N-terminal signal peptide occupies residues 1–26 (MERKMYKSTVFPICCLLFALFDRGNA). 2 consecutive Thioredoxin domains span residues 27 to 139 (LYGS…QIKA) and 161 to 275 (KKKS…QLES). Active-site nucleophile residues include C62 and C65. C62 and C65 form a disulfide bridge. Residues 146–170 (DGKTSGTKNGGGSSEKKKSEPSASV) are disordered. N173 carries an N-linked (GlcNAc...) asparagine glycan. Residues C197 and C200 each act as nucleophile in the active site. C197 and C200 are joined by a disulfide. Residues 444–447 (KDDL) carry the Prevents secretion from ER motif.

This sequence belongs to the protein disulfide isomerase family. As to expression, widely expressed.

The protein localises to the endoplasmic reticulum lumen. It catalyses the reaction Catalyzes the rearrangement of -S-S- bonds in proteins.. Acts as a protein-folding catalyst that interacts with nascent polypeptides to catalyze the formation, isomerization, and reduction or oxidation of disulfide bonds. The sequence is that of Protein disulfide-isomerase like 2-2 (PDIL2-2) from Arabidopsis thaliana (Mouse-ear cress).